The following is a 640-amino-acid chain: 1,4-alpha-glucan branching enzyme GlgB (640 aa).

D318 serves as the catalytic Nucleophile. Residue E371 is the Proton donor of the active site.

The protein belongs to the glycosyl hydrolase 13 family. GlgB subfamily. In terms of assembly, monomer.

The enzyme catalyses Transfers a segment of a (1-&gt;4)-alpha-D-glucan chain to a primary hydroxy group in a similar glucan chain.. Its pathway is glycan biosynthesis; glycogen biosynthesis. Its function is as follows. Catalyzes the formation of the alpha-1,6-glucosidic linkages in glycogen by scission of a 1,4-alpha-linked oligosaccharide from growing alpha-1,4-glucan chains and the subsequent attachment of the oligosaccharide to the alpha-1,6 position. The chain is 1,4-alpha-glucan branching enzyme GlgB from Francisella tularensis subsp. mediasiatica (strain FSC147).